A 351-amino-acid polypeptide reads, in one-letter code: Tsukushi-A (351 aa).

An N-terminal signal peptide occupies residues 1-17; that stretch reads MALSSWIFFLLVHGIVG. 9 LRR repeats span residues 59-82, 85-108, 109-132, 134-155, 158-181, 182-203, 204-226, 252-276, and 277-300; these read PLDT…VLSG, YTTL…TFSK, LRYL…SFLY, RLTE…AFTL, QGRS…AERP, VPNI…DLHG, IPLR…SFLG, LTSL…MFFG, and LKAL…IMLH.

In terms of assembly, interacts with bmp4. Interacts with dll1 (via extracellular region). Interacts with fgf8; inhibits fgf8 signaling. Interacts with nodal2/Xnr2; enhances nodal2 activity. During embryogenesis, localized to the animal hemisphere during late blastula and gastrula stages. At stage 10, expression is also detected around the dorsal blastopore lip. Expressed in the mandibular crest segment, branchial crest segment and differentiating somites at stage 21/22. Expressed in the germ ring including the shield at shield stage and in the tailbud at the 10-somite stage. At the early neurula stage (stage 13), expression is hardly detectable in the presumptive neural plate region, and restricted to the non-neural ectoderm where its levels increase by stage 14, especially in the presumptive anterior neural fold. Also expressed in the prospective cranial neural crest. At the early tailbud stage (stage 23), expressed in cranial neural crest cells, the dorsal retina and the lens placode.

It is found in the secreted. In terms of biological role, contributes to various developmental events through its interactions with multiple signaling pathways. Dorsalizing factor which functions as an inhibitor of bone morphogenetic proteins (BMP) during gastrulation. Promotes dll1-dependent activation of Notch signaling and is required for neural crest formation. Induces endoderm and dorsal mesoderm formation by enhancing nodal2/Xnr2 activity while inhibiting ventrolateral mesoderm formation through inhibition of fgf8. In Xenopus laevis (African clawed frog), this protein is Tsukushi-A.